The chain runs to 272 residues: Insulin-like growth factor-binding protein 1 (272 aa).

Residues 1 to 25 form the signal peptide; the sequence is MPEFLTVVSWPFLILLSFQVRVVAG. Positions 28 to 109 constitute an IGFBP N-terminal domain; sequence QPWHCAPCTA…TRGQGACVLE (82 aa). Disulfide bonds link Cys-32–Cys-59, Cys-35–Cys-61, Cys-43–Cys-62, Cys-50–Cys-65, Cys-73–Cys-86, and Cys-80–Cys-106. The segment at 115-143 is disordered; it reads TSSLSGSQHEEAKAAVASEDELAESPEMT. A compositionally biased stretch (acidic residues) spans 132 to 143; the sequence is SEDELAESPEMT. 3 positions are modified to phosphoserine: Ser-139, Ser-157, and Ser-169. Position 170 is a phosphothreonine (Thr-170). Tyr-171 carries the phosphotyrosine modification. Positions 186-264 constitute a Thyroglobulin type-1 domain; it reads KEPCQRELYK…SLETRGDPNC (79 aa). 3 disulfides stabilise this stretch: Cys-189–Cys-219, Cys-230–Cys-241, and Cys-243–Cys-264. Ser-255 bears the Phosphoserine mark. The Cell attachment site motif lies at 259–261; that stretch reads RGD.

Binds equally well IGF1 and IGF2. Interacts with integrin ITGA5:ITGB1. Interacts with VHL; this interaction inhibits HIF1A degradation.

The protein localises to the secreted. Its function is as follows. Multifunctional protein that plays a critical role in regulating the availability of IGFs such as IGF1 and IGF2 to their receptors and thereby regulates IGF-mediated cellular processes including cell migration, proliferation, differentiation or apoptosis in a cell-type specific manner. Also plays a positive role in cell migration by interacting with integrin ITGA5:ITGB1 through its RGD motif. Mechanistically, binding to integrins leads to activation of focal adhesion kinase/PTK2 and stimulation of the mitogen-activated protein kinase (MAPK) pathway. Regulates cardiomyocyte apoptosis by suppressing HIF-1alpha/HIF1A ubiquitination and subsequent degradation. The protein is Insulin-like growth factor-binding protein 1 (Igfbp1) of Rattus norvegicus (Rat).